Consider the following 252-residue polypeptide: Hydroxyacylglutathione hydrolase (252 aa).

Zn(2+) contacts are provided by His-54, His-56, Asp-58, His-59, His-111, Asp-128, and His-166.

Belongs to the metallo-beta-lactamase superfamily. Glyoxalase II family. As to quaternary structure, monomer. It depends on Zn(2+) as a cofactor.

The catalysed reaction is an S-(2-hydroxyacyl)glutathione + H2O = a 2-hydroxy carboxylate + glutathione + H(+). It participates in secondary metabolite metabolism; methylglyoxal degradation; (R)-lactate from methylglyoxal: step 2/2. Thiolesterase that catalyzes the hydrolysis of S-D-lactoyl-glutathione to form glutathione and D-lactic acid. This Aliivibrio fischeri (strain ATCC 700601 / ES114) (Vibrio fischeri) protein is Hydroxyacylglutathione hydrolase.